The primary structure comprises 413 residues: Tyrosine--tRNA ligase 2 (413 aa).

The short motif at 58–67 is the 'HIGH' region element; that stretch reads PSAPDVHLGH. 2 consecutive repeat copies span residues 89 to 94 and 96 to 101. A 2 X 6 AA tandem repeats region spans residues 89–101; the sequence is GDFTGKIGDPTGK. Positions 242 to 246 match the 'KMSKS' region motif; sequence KMSKS. Residue Lys245 participates in ATP binding. An S4 RNA-binding domain is found at 353–413; sequence IAMIDLLVKL…VGKRKFLKLQ (61 aa).

Belongs to the class-I aminoacyl-tRNA synthetase family. TyrS type 2 subfamily. As to quaternary structure, homodimer.

Its subcellular location is the cytoplasm. The catalysed reaction is tRNA(Tyr) + L-tyrosine + ATP = L-tyrosyl-tRNA(Tyr) + AMP + diphosphate + H(+). Functionally, catalyzes the attachment of tyrosine to tRNA(Tyr) in a two-step reaction: tyrosine is first activated by ATP to form Tyr-AMP and then transferred to the acceptor end of tRNA(Tyr). This chain is Tyrosine--tRNA ligase 2, found in Bacillus subtilis (strain 168).